The sequence spans 338 residues: MELCYENVNGSCIKSSYSPWPRAILYAVLGLGALLAVFGNLLVITAILHFKQLHTPTNFLVASLACADFLVGVTVMPFSTVRSVEGCWYFGDTYCKFHTCFDTSFCFASLFHLCCISIDRYVAVTDPLTYPTKFTISVSGVCIALSWFFSVTYSFSIFYTGANEEGIEELVVALTCVGGCQAPLNQNWVLLCFLLFFLPTVVMVFLYGRIFLVAKQQARKIEGSANQPQASSESYKERVARRERKAAKTLGIAMAAFLVSWLPYIIDAVIDAYMNFITPAYVYEILVWCVYYNSAMNPLIYAFFYPWFRKAIKLIVSGKVFRADSSRTNLFSEEAGAG.

At 1–23 (MELCYENVNGSCIKSSYSPWPRA) the chain is on the extracellular side. The N-linked (GlcNAc...) asparagine glycan is linked to N9. 2 disulfides stabilise this stretch: C12–C176 and C95–C180. A helical transmembrane segment spans residues 24 to 48 (ILYAVLGLGALLAVFGNLLVITAIL). Residues 49–58 (HFKQLHTPTN) lie on the Cytoplasmic side of the membrane. A helical membrane pass occupies residues 59 to 80 (FLVASLACADFLVGVTVMPFST). Residues 81–95 (VRSVEGCWYFGDTYC) lie on the Extracellular side of the membrane. The helical transmembrane segment at 96-118 (KFHTCFDTSFCFASLFHLCCISI) threads the bilayer. 2 residues coordinate spermidine: D102 and T103. The Cytoplasmic segment spans residues 119-138 (DRYVAVTDPLTYPTKFTISV). Residues 139-160 (SGVCIALSWFFSVTYSFSIFYT) traverse the membrane as a helical segment. At 161–186 (GANEEGIEELVVALTCVGGCQAPLNQ) the chain is on the extracellular side. The tract at residues 164–177 (EEGIEELVVALTCV) is extracellular Loop 2 (ECL2). A helical transmembrane segment spans residues 187–208 (NWVLLCFLLFFLPTVVMVFLYG). Topologically, residues 209-246 (RIFLVAKQQARKIEGSANQPQASSESYKERVARRERKA) are cytoplasmic. A helical membrane pass occupies residues 247–270 (AKTLGIAMAAFLVSWLPYIIDAVI). Topologically, residues 271–283 (DAYMNFITPAYVY) are extracellular. Residues 284 to 304 (EILVWCVYYNSAMNPLIYAFF) form a helical membrane-spanning segment. The Cytoplasmic portion of the chain corresponds to 305 to 338 (YPWFRKAIKLIVSGKVFRADSSRTNLFSEEAGAG).

This sequence belongs to the G-protein coupled receptor 1 family. As to expression, mainly expressed in neurons of the olfactory epithelium. Also expressed in the intestine.

The protein localises to the cell membrane. Its function is as follows. Olfactory receptor specific for trace amines, such as triethylamine, N-methylpiperidine, N,N-dimethylcyclohexylamine (DMCHA), beta-phenylethylamine (beta-PEA), cadaverine (CAD) and polyamines such as spermidine. Trace amine compounds are enriched in animal body fluids and act on trace amine-associated receptors (TAARs) to elicit both intraspecific and interspecific innate behaviors. Trace amine-binding causes a conformation change that triggers signaling via G(s)-class of G alpha proteins (GNAL or GNAS). In mature olfactory sensory neurons, Taar9 is coupled with GNAL/G(olf)G alpha protein and mediates activation of adenylate cyclase activity to activate cAMP signaling and eventually transmit odorant signals to achieve membrane depolarization. In immature olfactory sensory neurons, Taar9 is coupled with GNAS/G(s) G alpha proteins. The polypeptide is Trace amine-associated receptor 9 (Rattus norvegicus (Rat)).